The chain runs to 263 residues: 4'-phosphopantetheinyl transferase pptA (263 aa).

It belongs to the P-Pant transferase superfamily.

It carries out the reaction apo-[ACP] + CoA = holo-[ACP] + adenosine 3',5'-bisphosphate + H(+). Transfers the 4'-phosphopantetheine moiety from coenzyme A to a Ser of an acyl-carrier-protein. Activates the peptidyl carrier protein (PCP) domains of surfactin synthas. This chain is 4'-phosphopantetheinyl transferase pptA (pptA), found in Paxillus involutus (Naked brimcap).